Consider the following 425-residue polypeptide: Ribulose bisphosphate carboxylase (425 aa).

The active-site Proton acceptor is the K153. Substrate is bound at residue K155. 3 residues coordinate Mg(2+): K179, D181, and E182. K179 is subject to N6-carboxylysine. The active-site Proton acceptor is H269. Substrate-binding positions include R270, H302, 353-355, and 375-378; these read SGG and QAGG.

Belongs to the RuBisCO large chain family. Type III subfamily. Homodimer. In contrast to form I RuBisCO, the form III RuBisCO is composed solely of large subunits. Requires Mg(2+) as cofactor.

The enzyme catalyses 2 (2R)-3-phosphoglycerate + 2 H(+) = D-ribulose 1,5-bisphosphate + CO2 + H2O. It carries out the reaction D-ribulose 1,5-bisphosphate + O2 = 2-phosphoglycolate + (2R)-3-phosphoglycerate + 2 H(+). Reversibly inhibited by O(2). Catalyzes the addition of molecular CO(2) and H(2)O to ribulose 1,5-bisphosphate (RuBP), generating two molecules of 3-phosphoglycerate (3-PGA). Functions in an archaeal AMP degradation pathway, together with AMP phosphorylase and R15P isomerase. In Methanocaldococcus jannaschii (strain ATCC 43067 / DSM 2661 / JAL-1 / JCM 10045 / NBRC 100440) (Methanococcus jannaschii), this protein is Ribulose bisphosphate carboxylase.